The following is a 724-amino-acid chain: Long-chain-fatty-acid--CoA ligase ACSBG1 (724 aa).

The interval 1-51 is disordered; that stretch reads MPRNSGAGYGCPHGDPSMLDSRETPQESRQDMTVGTTQEKLKTSSLTDRQP. Residues 20-30 show a composition bias toward basic and acidic residues; sequence DSRETPQESRQ. Residues 31–51 are compositionally biased toward polar residues; the sequence is DMTVGTTQEKLKTSSLTDRQP. Phosphoserine is present on residues Ser-53 and Ser-56. Residues 282-290, 472-477, Asp-550, and Arg-565 each bind ATP; these read TSGTTGNPK and AGYGLS. The residue at position 658 (Tyr-658) is a Phosphotyrosine. Lys-701 provides a ligand contact to ATP.

The protein belongs to the ATP-dependent AMP-binding enzyme family. Bubblegum subfamily.

The protein resides in the cytoplasm. It localises to the cytoplasmic vesicle. Its subcellular location is the microsome. The protein localises to the endoplasmic reticulum. It is found in the cell membrane. The enzyme catalyses a long-chain fatty acid + ATP + CoA = a long-chain fatty acyl-CoA + AMP + diphosphate. It carries out the reaction (E)-hexadec-2-enoate + ATP + CoA = (2E)-hexadecenoyl-CoA + AMP + diphosphate. The catalysed reaction is hexadecanoate + ATP + CoA = hexadecanoyl-CoA + AMP + diphosphate. Functionally, catalyzes the conversion of fatty acids such as long-chain and very long-chain fatty acids to their active form acyl-CoAs for both synthesis of cellular lipids, and degradation via beta-oxidation. Can activate diverse saturated, monosaturated and polyunsaturated fatty acids. This chain is Long-chain-fatty-acid--CoA ligase ACSBG1, found in Macaca fascicularis (Crab-eating macaque).